The sequence spans 225 residues: Cytidylate kinase (225 aa).

An ATP-binding site is contributed by Gly11–Thr19.

It belongs to the cytidylate kinase family. Type 1 subfamily.

The protein resides in the cytoplasm. The enzyme catalyses CMP + ATP = CDP + ADP. It carries out the reaction dCMP + ATP = dCDP + ADP. This chain is Cytidylate kinase, found in Bacillus cytotoxicus (strain DSM 22905 / CIP 110041 / 391-98 / NVH 391-98).